We begin with the raw amino-acid sequence, 117 residues long: Immunoglobulin heavy variable 1-45 (117 aa).

An N-terminal signal peptide occupies residues 1–19 (MDWTWRILFLVAAVTDAYS). Positions 20–44 (QMQLVQSGAEVKKTGSSVKVSCKAS) are framework-1. The Ig-like domain occupies 20–117 (QMQLVQSGAE…EDTAMYYCAR (98 aa)). An intrachain disulfide couples C41 to C115. Positions 45–52 (GYTFTYRY) are complementarity-determining-1. Positions 53 to 69 (LHWVRQAPGQALEWMGW) are framework-2. The tract at residues 70-77 (ITPFNGNT) is complementarity-determining-2. The segment at 78–115 (NYAQKFQDRVTITRDRSMSTAYMELSSLRSEDTAMYYC) is framework-3. Positions 116–117 (AR) are complementarity-determining-3.

In terms of assembly, immunoglobulins are composed of two identical heavy chains and two identical light chains; disulfide-linked.

It localises to the secreted. The protein localises to the cell membrane. Its function is as follows. V region of the variable domain of immunoglobulin heavy chains that participates in the antigen recognition. Immunoglobulins, also known as antibodies, are membrane-bound or secreted glycoproteins produced by B lymphocytes. In the recognition phase of humoral immunity, the membrane-bound immunoglobulins serve as receptors which, upon binding of a specific antigen, trigger the clonal expansion and differentiation of B lymphocytes into immunoglobulins-secreting plasma cells. Secreted immunoglobulins mediate the effector phase of humoral immunity, which results in the elimination of bound antigens. The antigen binding site is formed by the variable domain of one heavy chain, together with that of its associated light chain. Thus, each immunoglobulin has two antigen binding sites with remarkable affinity for a particular antigen. The variable domains are assembled by a process called V-(D)-J rearrangement and can then be subjected to somatic hypermutations which, after exposure to antigen and selection, allow affinity maturation for a particular antigen. This is Immunoglobulin heavy variable 1-45 from Homo sapiens (Human).